A 340-amino-acid polypeptide reads, in one-letter code: Glycerol-3-phosphate dehydrogenase [NAD(P)+] (340 aa).

NADPH contacts are provided by Ser15, Tyr16, His36, and Lys110. Sn-glycerol 3-phosphate is bound by residues Lys110, Gly139, and Thr141. Position 143 (Ala143) interacts with NADPH. Sn-glycerol 3-phosphate contacts are provided by Lys196, Asp249, Ser259, Arg260, and Asn261. The Proton acceptor role is filled by Lys196. Position 260 (Arg260) interacts with NADPH. Positions 284 and 286 each coordinate NADPH.

It belongs to the NAD-dependent glycerol-3-phosphate dehydrogenase family.

The protein localises to the cytoplasm. The enzyme catalyses sn-glycerol 3-phosphate + NAD(+) = dihydroxyacetone phosphate + NADH + H(+). The catalysed reaction is sn-glycerol 3-phosphate + NADP(+) = dihydroxyacetone phosphate + NADPH + H(+). It functions in the pathway membrane lipid metabolism; glycerophospholipid metabolism. In terms of biological role, catalyzes the reduction of the glycolytic intermediate dihydroxyacetone phosphate (DHAP) to sn-glycerol 3-phosphate (G3P), the key precursor for phospholipid synthesis. The protein is Glycerol-3-phosphate dehydrogenase [NAD(P)+] of Serratia marcescens.